Consider the following 181-residue polypeptide: Protein canopy homolog 1 (181 aa).

Positions 1 to 21 (MAILLHFGVLITAFLSSHVEG) are cleaved as a signal peptide. The region spanning 25-177 (PILYCGACRA…EETGLCKEYL (153 aa)) is the Saposin B-type domain. 3 cysteine pairs are disulfide-bonded: cysteine 29/cysteine 173, cysteine 32/cysteine 166, and cysteine 87/cysteine 139. A Prevents secretion from ER motif is present at residues 178 to 181 (HNEL).

The protein belongs to the canopy family.

It is found in the endoplasmic reticulum. Its function is as follows. Plays an role in early embryonic development. This Xenopus laevis (African clawed frog) protein is Protein canopy homolog 1 (cnpy1).